Here is a 427-residue protein sequence, read N- to C-terminus: Adenylosuccinate synthetase (427 aa).

Residues 12–18 (GDEGKGK) and 40–42 (GHT) each bind GTP. D13 acts as the Proton acceptor in catalysis. Mg(2+) is bound by residues D13 and G40. IMP is bound by residues 13-16 (DEGK), 38-41 (NAGH), T127, R141, Q222, T237, and R301. The active-site Proton donor is the H41. 297–303 (VVTKRPR) is a binding site for substrate. GTP contacts are provided by residues R303, 329 to 331 (SLD), and 411 to 413 (AVG).

It belongs to the adenylosuccinate synthetase family. As to quaternary structure, homodimer. Mg(2+) is required as a cofactor.

The protein localises to the cytoplasm. The catalysed reaction is IMP + L-aspartate + GTP = N(6)-(1,2-dicarboxyethyl)-AMP + GDP + phosphate + 2 H(+). It functions in the pathway purine metabolism; AMP biosynthesis via de novo pathway; AMP from IMP: step 1/2. Its function is as follows. Plays an important role in the de novo pathway of purine nucleotide biosynthesis. Catalyzes the first committed step in the biosynthesis of AMP from IMP. This chain is Adenylosuccinate synthetase, found in Leuconostoc citreum (strain KM20).